We begin with the raw amino-acid sequence, 166 residues long: Small ribosomal subunit protein uS5 (166 aa).

The S5 DRBM domain occupies 11–74 (LQEKLIAVNR…EKARRNMINV (64 aa)).

Belongs to the universal ribosomal protein uS5 family. Part of the 30S ribosomal subunit. Contacts proteins S4 and S8.

With S4 and S12 plays an important role in translational accuracy. Functionally, located at the back of the 30S subunit body where it stabilizes the conformation of the head with respect to the body. This is Small ribosomal subunit protein uS5 from Mannheimia succiniciproducens (strain KCTC 0769BP / MBEL55E).